A 209-amino-acid chain; its full sequence is Orotate phosphoribosyltransferase (209 aa).

5-phospho-alpha-D-ribose 1-diphosphate contacts are provided by residues Arg-96, Lys-100, His-102, and Glu-122–Ser-130. Orotate is bound at residue Ser-126.

Belongs to the purine/pyrimidine phosphoribosyltransferase family. PyrE subfamily. As to quaternary structure, homodimer. It depends on Mg(2+) as a cofactor.

The enzyme catalyses orotidine 5'-phosphate + diphosphate = orotate + 5-phospho-alpha-D-ribose 1-diphosphate. The protein operates within pyrimidine metabolism; UMP biosynthesis via de novo pathway; UMP from orotate: step 1/2. Functionally, catalyzes the transfer of a ribosyl phosphate group from 5-phosphoribose 1-diphosphate to orotate, leading to the formation of orotidine monophosphate (OMP). In Streptococcus sanguinis (strain SK36), this protein is Orotate phosphoribosyltransferase.